The sequence spans 375 residues: Formate dehydrogenase (375 aa).

Residues isoleucine 94 and asparagine 120 each coordinate substrate. NAD(+) is bound by residues 175 to 176 (RI), aspartate 196, 231 to 235 (PLHEK), threonine 257, aspartate 283, 312 to 315 (HMSG), and serine 358.

The protein belongs to the D-isomer specific 2-hydroxyacid dehydrogenase family. FDH subfamily. Homodimer.

The protein resides in the cytoplasm. The enzyme catalyses formate + NAD(+) = CO2 + NADH. Catalyzes the NAD(+)-dependent oxidation of formate to carbon dioxide. Formate oxidation is the final step in the methanol oxidation pathway in methylotrophic microorganisms. Has a role in the detoxification of exogenous formate in non-methylotrophic organisms. This is Formate dehydrogenase from Neurospora crassa (strain ATCC 24698 / 74-OR23-1A / CBS 708.71 / DSM 1257 / FGSC 987).